Consider the following 432-residue polypeptide: Putative D-alanyl-D-alanine carboxypeptidase (432 aa).

A helical; Signal-anchor transmembrane segment spans residues Ala-7–Leu-25.

It belongs to the peptidase S12 family. YfeW subfamily.

It localises to the cell inner membrane. It catalyses the reaction Preferential cleavage: (Ac)2-L-Lys-D-Ala-|-D-Ala. Also transpeptidation of peptidyl-alanyl moieties that are N-acyl substituents of D-alanine.. This is Putative D-alanyl-D-alanine carboxypeptidase from Salmonella heidelberg (strain SL476).